The chain runs to 798 residues: Transferrin receptor protein 2 (798 aa).

Residues 1–81 (MEQRWGLLRK…WAAAGRKAAP (81 aa)) are Cytoplasmic-facing. An Endocytosis signal motif is present at residues 23–26 (YRRV). The segment at 25-44 (RVEGPQLENLEEEDREEGEE) is disordered. The span at 33 to 44 (NLEEEDREEGEE) shows a compositional bias: acidic residues. A helical; Signal-anchor for type II membrane protein membrane pass occupies residues 82–102 (YLVLTTLLIFTGAFLLGYVAF). At 103–798 (RGSCQACGDS…GDVWNIDNNF (696 aa)) the chain is on the extracellular side. Residues Asn235, Asn334, and Asn535 are each glycosylated (N-linked (GlcNAc...) asparagine).

Belongs to the peptidase M28 family. M28B subfamily. Homodimer.

The protein localises to the cell membrane. Its function is as follows. Mediates cellular uptake of transferrin-bound iron in a non-iron dependent manner. May be involved in iron metabolism, hepatocyte function and erythrocyte differentiation. This Rattus norvegicus (Rat) protein is Transferrin receptor protein 2 (Tfr2).